Consider the following 1001-residue polypeptide: MPKTDACERMLQSIRSHKNSKLENQRLPAILLHSIDNYIDSKSLQRTASVYFSALLALIKQSNGFDYSSIYILSIVMPATPSDEKLLHIDLLYTQIVPYLQKNNDDAPTIRCALNCTQEFLLSFSNESKELYLKAVDVVMPLLVKFSVDLRPKVRKISIQVLQTLKQKYDGLLPHLYPAIFDELQRSLSEVSNMDNPSFSKGLHTLHLLECLVDINQASGSDLGIICNALSRILTSNIPTSEPIFEMSIKLILKVLSERIDALSDAVIYELCDSLIPYWYRALSVTLLLYDNFVNRNPSRGIKGIQTLLEKILDFCISPLQSSESDVEYDGATSSDILNSLKFLRNKFTMKFVNKKNWATVLSNGIKKVIKTITASSRHANYAKALPRCSVYLQLLLGAIPEDQISELLPAFSVVARAIIKNKLVETPECLDLFKIFIQKLASPTFLECLGFADNFCNIQKSHWLPEVFRDNITGETPETFFDCFLPTIEAGNSQWWELLPLYTKAGCITNNLNENTLKKLASAIYNDRSCHSHVAQAFVDLTKIENVRQLISSNSSNLIGVLGNTLATMKNDDSNAEDLVMAATSIFSVAGDQQLQIITNLCESAPLSEPSLGSTGVIKLFPALLSISPADTWKPFLPHLVKLFDIAIPSNLSQSLSVLNFGPGLAYRLLQATLSNERMISAIVPVISRLYDSMNSVGDGSQALPKYVALERLKTWKLLFKLLPNDEFHLLPSAIAEVVLFSKHHDDDLRAMAFELLVEVGNRMKNGGKINMSLIDGEEPNKTVVEANINEYISMISANLMNDSLNLKVSTIFALTRIFYEFSDYIDDDYVNAVLEEVQSSLQSNNQEIARAAVGFIKMYITSFTKSKVLFHLDTLLPLILRWIKEHNAYVKLKAKQLLDRMLRVFSLKELEAFAENETDKEWLQRIWRVRRSRGDKKVVDNKRDASDSEDLAIKNPMNKKAKVGKVDFRKHEKKLNKASMHRDKFSTGMHTSKRVQKKN.

Positions 939-948 (KVVDNKRDAS) are enriched in basic and acidic residues. The tract at residues 939-1001 (KVVDNKRDAS…HTSKRVQKKN (63 aa)) is disordered. Ser-948 and Ser-950 each carry phosphoserine.

This is an uncharacterized protein from Schizosaccharomyces pombe (strain 972 / ATCC 24843) (Fission yeast).